Here is a 63-residue protein sequence, read N- to C-terminus: SPbeta prophage-derived uncharacterized protein YomP (63 aa).

The sequence is that of SPbeta prophage-derived uncharacterized protein YomP (yomP) from Bacillus subtilis (strain 168).